Reading from the N-terminus, the 66-residue chain is MEMKRFLCAKCQKVIEVPYGVPKPDVCPYCGAPATFIHRIDAGGRGLGPGRGRRCGMRMMGRFRRE.

This is an uncharacterized protein from Methanocaldococcus jannaschii (strain ATCC 43067 / DSM 2661 / JAL-1 / JCM 10045 / NBRC 100440) (Methanococcus jannaschii).